The chain runs to 89 residues: Small ribosomal subunit protein uS15 (89 aa).

The protein belongs to the universal ribosomal protein uS15 family. As to quaternary structure, part of the 30S ribosomal subunit. Forms a bridge to the 50S subunit in the 70S ribosome, contacting the 23S rRNA.

In terms of biological role, one of the primary rRNA binding proteins, it binds directly to 16S rRNA where it helps nucleate assembly of the platform of the 30S subunit by binding and bridging several RNA helices of the 16S rRNA. Forms an intersubunit bridge (bridge B4) with the 23S rRNA of the 50S subunit in the ribosome. The polypeptide is Small ribosomal subunit protein uS15 (Rippkaea orientalis (strain PCC 8801 / RF-1) (Cyanothece sp. (strain PCC 8801))).